Here is a 204-residue protein sequence, read N- to C-terminus: MTDRIARVERTTKESSITVELNLDGTGIVDVSTGVPFFDHMLTALGSHASFDLTVHAKGDIEIEAHHTVEDTSIVLGQALGQALGDKKGIRRFGDAFIPMDETLAHASVDVSGRPYCVHTGEPEHLLHSVIGGYPGVPYATVINRHVFESIALNARIALHVRVLYGRDQHHITEAEFKAVARALREAVEPDPRVTGVPSTKGSL.

The protein belongs to the imidazoleglycerol-phosphate dehydratase family.

The protein resides in the cytoplasm. The enzyme catalyses D-erythro-1-(imidazol-4-yl)glycerol 3-phosphate = 3-(imidazol-4-yl)-2-oxopropyl phosphate + H2O. Its pathway is amino-acid biosynthesis; L-histidine biosynthesis; L-histidine from 5-phospho-alpha-D-ribose 1-diphosphate: step 6/9. In Rhodococcus jostii (strain RHA1), this protein is Imidazoleglycerol-phosphate dehydratase.